The primary structure comprises 332 residues: Phosphate acetyltransferase (332 aa).

It belongs to the phosphate acetyltransferase and butyryltransferase family.

The protein resides in the cytoplasm. The catalysed reaction is acetyl-CoA + phosphate = acetyl phosphate + CoA. Its pathway is metabolic intermediate biosynthesis; acetyl-CoA biosynthesis; acetyl-CoA from acetate: step 2/2. This is Phosphate acetyltransferase (pta) from Acetivibrio thermocellus (strain ATCC 27405 / DSM 1237 / JCM 9322 / NBRC 103400 / NCIMB 10682 / NRRL B-4536 / VPI 7372) (Clostridium thermocellum).